Reading from the N-terminus, the 597-residue chain is MNTGISPKQDDASNSNLLNIGQDHSLQYQGLEHNDSQYRDASHQTPHQYLNQFQAQPQQQQQQQQQQQQQQQQAPYQGHFQQSPQQQQQNVYYPLPPQSLTQPTSQSQQQQQQQQQQQYANSNSNSNNNVNVNALPQDFGYMQQTGSGQNYPTINQQQFSEFYNSFLSHLTQKQTNPSVTGTGASSNNNSNNNNVSSGNNSTSSNPAQLAASQLNPATAAAAAANNAAGPASYLSQLPQVQRYYPNNMNALSSLLDPSSAGNAAGNANTATHPGLLPPNLQPQLTHHQQQMQQQLQLQQQQQLQQQQQLQQQHQLQQQQQLQQQHHHLQQQQQQQQHPVVKKLSSTQSRIERRKQLKKQGPKRPSSAYFLFSMSIRNELLQQFPEAKVPELSKLASARWKELTDDQKKPFYEEFRTNWEKYRVVRDAYEKTLPPKRPSGPFIQFTQEIRPTVVKENPDKGLIEITKIIGERWRELDPAKKAEYTETYKKRLKEWESCYPDENDPNGNPTGHSHKAMNMNLNMDTKIMENQDSIEHITANAIDSVTGSNSNSTNPNTPVSPPISLQQQPLQQQQQQQQQQQHMLLADPTTNGSIIKNE.

Over residues 1 to 28 the composition is skewed to polar residues; sequence MNTGISPKQDDASNSNLLNIGQDHSLQY. 4 disordered regions span residues 1–134, 174–212, 259–291, and 327–364; these read MNTG…NVNA, QTNP…LAAS, SAGN…QQQM, and HLQQ…PKRP. Over residues 32–42 the composition is skewed to basic and acidic residues; that stretch reads EHNDSQYRDAS. 5 stretches are compositionally biased toward low complexity: residues 52–134, 178–212, 260–271, 281–291, and 327–337; these read QFQA…NVNA, SVTG…LAAS, AGNAAGNANTAT, QPQLTHHQQQM, and HLQQQQQQQQH. Residues 351–361 are compositionally biased toward basic residues; that stretch reads ERRKQLKKQGP. DNA-binding regions (HMG box) lie at residues 361–429 and 434–502; these read PKRP…DAYE and PKRP…PDEN. Residue Ser-532 is modified to Phosphoserine. Low complexity-rich tracts occupy residues 543 to 556 and 564 to 580; these read SVTG…NPNT and LQQQ…QQQQ. The segment at 543-597 is disordered; the sequence is SVTGSNSNSTNPNTPVSPPISLQQQPLQQQQQQQQQQQHMLLADPTTNGSIIKNE. Polar residues predominate over residues 587–597; the sequence is PTTNGSIIKNE.

It localises to the nucleus. Its function is as follows. Binds to platinated DNA and confers sensitivity to the anticancer drug cisplatin. Activate the expression of the COX5B gene. The polypeptide is Intrastrand cross-link recognition protein (IXR1) (Saccharomyces cerevisiae (strain ATCC 204508 / S288c) (Baker's yeast)).